We begin with the raw amino-acid sequence, 259 residues long: Putative deoxyribonuclease TATDN1 homolog (259 aa).

4 residues coordinate a divalent metal cation: Glu-82, His-116, His-138, and Asp-186.

It belongs to the metallo-dependent hydrolases superfamily. TatD-type hydrolase family. The cofactor is a divalent metal cation.

It is found in the nucleus. Functionally, putative deoxyribonuclease. The chain is Putative deoxyribonuclease TATDN1 homolog from Vairimorpha ceranae (strain BRL01) (Microsporidian parasite).